Consider the following 430-residue polypeptide: Cytochrome c biogenesis protein CcsB (430 aa).

3 consecutive transmembrane segments (helical) span residues 14–34, 72–92, and 162–182; these read LRLAIALLLLIAAASAVGTIL, SVWFLALLAWLGLALMLCSWR, and VGPLLVHTGLVLLLIGAAWGA.

This sequence belongs to the Ccs1/CcsB family. In terms of assembly, may interact with CcsA.

The protein localises to the cellular thylakoid membrane. In terms of biological role, required during biogenesis of c-type cytochromes (cytochrome c6 and cytochrome f) at the step of heme attachment. The chain is Cytochrome c biogenesis protein CcsB from Synechococcus sp. (strain WH7803).